We begin with the raw amino-acid sequence, 423 residues long: Histidine--tRNA ligase 2 (423 aa).

The protein belongs to the class-II aminoacyl-tRNA synthetase family. As to quaternary structure, homodimer.

It is found in the cytoplasm. The catalysed reaction is tRNA(His) + L-histidine + ATP = L-histidyl-tRNA(His) + AMP + diphosphate + H(+). This chain is Histidine--tRNA ligase 2, found in Bacillus cereus (strain ATCC 10987 / NRS 248).